The primary structure comprises 175 residues: Inorganic pyrophosphatase (175 aa).

Substrate contacts are provided by K30, R44, and Y56. Residues D66, D71, and D103 each contribute to the Mg(2+) site. Substrate is bound at residue Y142.

It belongs to the PPase family. Homohexamer. Mg(2+) serves as cofactor.

The protein resides in the cytoplasm. It catalyses the reaction diphosphate + H2O = 2 phosphate + H(+). In terms of biological role, catalyzes the hydrolysis of inorganic pyrophosphate (PPi) forming two phosphate ions. The chain is Inorganic pyrophosphatase from Ralstonia nicotianae (strain ATCC BAA-1114 / GMI1000) (Ralstonia solanacearum).